The chain runs to 304 residues: Putative ankyrin repeat protein R598 (304 aa).

7 ANK repeats span residues 7–36 (NIVT…SINL), 77–107 (YIST…PVDF), 122–151 (GSNH…DVNA), 152–181 (HNYL…NVLR), 183–209 (ANGN…EIDM), 210–239 (NLSR…DINK), and 265–293 (FDFT…NVDI).

The polypeptide is Putative ankyrin repeat protein R598 (Acanthamoeba polyphaga (Amoeba)).